The sequence spans 55 residues: Large ribosomal subunit protein bL33 (55 aa).

This sequence belongs to the bacterial ribosomal protein bL33 family.

This is Large ribosomal subunit protein bL33 from Yersinia pestis (strain Pestoides F).